The chain runs to 365 residues: tRNA N6-adenosine threonylcarbamoyltransferase (365 aa).

The Fe cation site is built by His-119 and His-123. Substrate contacts are provided by residues 141 to 145, Asp-174, Gly-187, and Asn-288; that span reads LVSGG. Asp-316 contacts Fe cation.

The protein belongs to the KAE1 / TsaD family. Fe(2+) is required as a cofactor.

The protein resides in the cytoplasm. It carries out the reaction L-threonylcarbamoyladenylate + adenosine(37) in tRNA = N(6)-L-threonylcarbamoyladenosine(37) in tRNA + AMP + H(+). Functionally, required for the formation of a threonylcarbamoyl group on adenosine at position 37 (t(6)A37) in tRNAs that read codons beginning with adenine. Is involved in the transfer of the threonylcarbamoyl moiety of threonylcarbamoyl-AMP (TC-AMP) to the N6 group of A37, together with TsaE and TsaB. TsaD likely plays a direct catalytic role in this reaction. The protein is tRNA N6-adenosine threonylcarbamoyltransferase of Rhizobium leguminosarum bv. trifolii (strain WSM2304).